The sequence spans 519 residues: Probable cytosol aminopeptidase (519 aa).

Positions 283 and 288 each coordinate Mn(2+). Lys-295 is a catalytic residue. Asp-306, Asp-365, and Glu-367 together coordinate Mn(2+). Arg-369 is an active-site residue.

It belongs to the peptidase M17 family. Requires Mn(2+) as cofactor.

Its subcellular location is the cytoplasm. It catalyses the reaction Release of an N-terminal amino acid, Xaa-|-Yaa-, in which Xaa is preferably Leu, but may be other amino acids including Pro although not Arg or Lys, and Yaa may be Pro. Amino acid amides and methyl esters are also readily hydrolyzed, but rates on arylamides are exceedingly low.. The enzyme catalyses Release of an N-terminal amino acid, preferentially leucine, but not glutamic or aspartic acids.. Presumably involved in the processing and regular turnover of intracellular proteins. Catalyzes the removal of unsubstituted N-terminal amino acids from various peptides. The polypeptide is Probable cytosol aminopeptidase (Mycobacterium marinum (strain ATCC BAA-535 / M)).